Consider the following 496-residue polypeptide: MTRGARLRSDARAQLNQLSLDGGTGSGQKGKCEEFPSSLSSVSPGLEAAALLLAVTMDPLETPIKDGILYQQHVKFGKKCWRKVWALLYAGGPSGVARLESWEVRDGGLGAAGDRSAGPGRRGERRVIRLADCVSVLPADGESCPRDTGAFLLTTTERSHLLAAQHRQAWMGPICQLAFPGTGEASSGSTDAQSPKRGLVPMEENSIYSSWQEVGEFPVVVQRTEAATRCQLKGPALLVLGPDAIQLREAKGTQALYSWPYHFLRKFGSDKGVFSFEAGRRCHSGEGLFAFSTPCAPDLCRAVAGAIARQRERLPELTRPQPCPLPRATSLPSLDTPGELREMPPGPEPPTSRKMHLAEPGPQSLPLLLGPEPNDLASGLYASVCKRASGPPGNEHLYENLCVLEASPTLHGGEPEPHEGPGSRSPTTSPIYHNGQDLSWPGPANDSTLEAQYRRLLELDQVEGTGRPDPQAGFKAKLVTLLSRERRKGPAPCDRP.

Positions 18-38 (LSLDGGTGSGQKGKCEEFPSS) are disordered. The 117-residue stretch at 63–179 (PIKDGILYQQ…WMGPICQLAF (117 aa)) folds into the PH domain. Ser-194 carries the post-translational modification Phosphoserine. Residues 213-317 (EVGEFPVVVQ…ARQRERLPEL (105 aa)) form the IRS-type PTB domain. The tract at residues 313-363 (RLPELTRPQPCPLPRATSLPSLDTPGELREMPPGPEPPTSRKMHLAEPGPQ) is disordered. A phosphoserine mark is found at Ser-330 and Ser-364. Tyr-381 is subject to Phosphotyrosine. Residues 408-447 (PTLHGGEPEPHEGPGSRSPTTSPIYHNGQDLSWPGPANDS) are disordered. Residue Ser-425 is modified to Phosphoserine.

Belongs to the DOK family. Type A subfamily. As to quaternary structure, on tyrosine phosphorylation, interacts with CSK and INPP5D/SHIP1 via their SH2 domains. Both Tyr-381 and Tyr-398 are required for interaction with INPP5D. Only Tyr-381 is required for interaction with CSK. Binds ABL1 through the PTB domain and in a kinase-dependent manner. Does not interact with RasGAP. Constitutively tyrosine-phosphorylated. In terms of processing, on IL2 stimulation, phosphorylated on C-terminal tyrosine residues possibly by Src kinases. Can also be phosphorylated by ABL1 kinase. In terms of tissue distribution, expressed in spleen.

Its subcellular location is the cytoplasm. The protein localises to the cell membrane. Functionally, DOK proteins are enzymatically inert adaptor or scaffolding proteins. They provide a docking platform for the assembly of multimolecular signaling complexes. DOK3 is a negative regulator of JNK signaling in B-cells through interaction with INPP5D/SHIP1. May modulate ABL1 function. The sequence is that of Docking protein 3 (DOK3) from Homo sapiens (Human).